A 470-amino-acid chain; its full sequence is Na(+)/H(+) antiporter NhaA 2 (470 aa).

11 helical membrane-spanning segments follow: residues 34-54, 85-105, 121-141, 150-170, 179-199, 202-222, 241-261, 317-337, 357-377, 395-415, and 423-443; these read FLHI…IALL, LEWV…GMEI, ALPA…YLLL, GWGV…TLLG, VLLL…IAVF, SGVA…VFAM, WAGV…IGLI, SLIA…FALA, LATA…ACWL, LLVL…IAQL, and LAAG…VALV.

It belongs to the NhaA Na(+)/H(+) (TC 2.A.33) antiporter family.

It is found in the cell inner membrane. The enzyme catalyses Na(+)(in) + 2 H(+)(out) = Na(+)(out) + 2 H(+)(in). In terms of biological role, na(+)/H(+) antiporter that extrudes sodium in exchange for external protons. The sequence is that of Na(+)/H(+) antiporter NhaA 2 from Myxococcus xanthus (strain DK1622).